The chain runs to 149 residues: Protein TraJ (149 aa).

It is found in the cell membrane. This protein is essential for positively regulating the expression of transfer genes that are involved in the conjugal transfer of DNA between bacterial cells. This Escherichia coli protein is Protein TraJ (traJ).